Here is a 212-residue protein sequence, read N- to C-terminus: Large ribosomal subunit protein uL3 (212 aa).

The interval 127–153 (FRGGPATHGQSDRHRAPGSIGSGTTPG) is disordered.

It belongs to the universal ribosomal protein uL3 family. In terms of assembly, part of the 50S ribosomal subunit. Forms a cluster with proteins L14 and L19.

One of the primary rRNA binding proteins, it binds directly near the 3'-end of the 23S rRNA, where it nucleates assembly of the 50S subunit. This chain is Large ribosomal subunit protein uL3, found in Herpetosiphon aurantiacus (strain ATCC 23779 / DSM 785 / 114-95).